Here is a 660-residue protein sequence, read N- to C-terminus: DNA mismatch repair protein MutL (660 aa).

It belongs to the DNA mismatch repair MutL/HexB family.

Its function is as follows. This protein is involved in the repair of mismatches in DNA. It is required for dam-dependent methyl-directed DNA mismatch repair. May act as a 'molecular matchmaker', a protein that promotes the formation of a stable complex between two or more DNA-binding proteins in an ATP-dependent manner without itself being part of a final effector complex. In Streptococcus equi subsp. zooepidemicus (strain H70), this protein is DNA mismatch repair protein MutL.